A 69-amino-acid chain; its full sequence is UPF0150 protein Ta0767 (69 aa).

Belongs to the UPF0150 family.

This is UPF0150 protein Ta0767 from Thermoplasma acidophilum (strain ATCC 25905 / DSM 1728 / JCM 9062 / NBRC 15155 / AMRC-C165).